The chain runs to 704 residues: Elongation factor G (704 aa).

A tr-type G domain is found at 8-290 (ARYRNIGISA…AVIDYLPSPV (283 aa)). GTP is bound by residues 17 to 24 (AHIDAGKT), 88 to 92 (DTPGH), and 142 to 145 (NKMD).

The protein belongs to the TRAFAC class translation factor GTPase superfamily. Classic translation factor GTPase family. EF-G/EF-2 subfamily.

The protein resides in the cytoplasm. Its function is as follows. Catalyzes the GTP-dependent ribosomal translocation step during translation elongation. During this step, the ribosome changes from the pre-translocational (PRE) to the post-translocational (POST) state as the newly formed A-site-bound peptidyl-tRNA and P-site-bound deacylated tRNA move to the P and E sites, respectively. Catalyzes the coordinated movement of the two tRNA molecules, the mRNA and conformational changes in the ribosome. In Salmonella agona (strain SL483), this protein is Elongation factor G.